The primary structure comprises 294 residues: Undecaprenyl-diphosphatase (294 aa).

6 consecutive transmembrane segments (helical) span residues 39–59 (PGAA…ILYF), 93–113 (ATLG…GFTL), 123–143 (NLWI…MVDA), 198–218 (SFLM…IKAV), 232–252 (PTLV…IGFL), and 268–288 (IGLA…AIDP).

It belongs to the UppP family.

The protein localises to the cell membrane. It catalyses the reaction di-trans,octa-cis-undecaprenyl diphosphate + H2O = di-trans,octa-cis-undecaprenyl phosphate + phosphate + H(+). Catalyzes the dephosphorylation of undecaprenyl diphosphate (UPP). Confers resistance to bacitracin. This is Undecaprenyl-diphosphatase from Bifidobacterium longum (strain DJO10A).